The sequence spans 356 residues: Phosphoserine aminotransferase (356 aa).

Arginine 41 is an L-glutamate binding site. Pyridoxal 5'-phosphate is bound by residues 76 to 77 (AS), tryptophan 102, threonine 150, aspartate 169, and glutamine 192. Position 193 is an N6-(pyridoxal phosphate)lysine (lysine 193). 234–235 (NT) contributes to the pyridoxal 5'-phosphate binding site.

It belongs to the class-V pyridoxal-phosphate-dependent aminotransferase family. SerC subfamily. In terms of assembly, homodimer. It depends on pyridoxal 5'-phosphate as a cofactor.

Its subcellular location is the cytoplasm. It carries out the reaction O-phospho-L-serine + 2-oxoglutarate = 3-phosphooxypyruvate + L-glutamate. The enzyme catalyses 4-(phosphooxy)-L-threonine + 2-oxoglutarate = (R)-3-hydroxy-2-oxo-4-phosphooxybutanoate + L-glutamate. It participates in amino-acid biosynthesis; L-serine biosynthesis; L-serine from 3-phospho-D-glycerate: step 2/3. It functions in the pathway cofactor biosynthesis; pyridoxine 5'-phosphate biosynthesis; pyridoxine 5'-phosphate from D-erythrose 4-phosphate: step 3/5. Functionally, catalyzes the reversible conversion of 3-phosphohydroxypyruvate to phosphoserine and of 3-hydroxy-2-oxo-4-phosphonooxybutanoate to phosphohydroxythreonine. The protein is Phosphoserine aminotransferase of Flavobacterium psychrophilum (strain ATCC 49511 / DSM 21280 / CIP 103535 / JIP02/86).